Here is a 248-residue protein sequence, read N- to C-terminus: Probable pyridoxal 5'-phosphate synthase subunit pdx2 (248 aa).

L-glutamine is bound at residue 70–72 (GES). The Nucleophile role is filled by cysteine 106. L-glutamine contacts are provided by residues arginine 136 and 174–175 (IR). Residues histidine 221 and glutamate 223 each act as charge relay system in the active site.

Belongs to the glutaminase PdxT/SNO family.

The enzyme catalyses aldehydo-D-ribose 5-phosphate + D-glyceraldehyde 3-phosphate + L-glutamine = pyridoxal 5'-phosphate + L-glutamate + phosphate + 3 H2O + H(+). It carries out the reaction L-glutamine + H2O = L-glutamate + NH4(+). The protein operates within cofactor biosynthesis; pyridoxal 5'-phosphate biosynthesis. Catalyzes the hydrolysis of glutamine to glutamate and ammonia as part of the biosynthesis of pyridoxal 5'-phosphate. The resulting ammonia molecule is channeled to the active site of pdx1. This chain is Probable pyridoxal 5'-phosphate synthase subunit pdx2, found in Dictyostelium discoideum (Social amoeba).